The following is a 324-amino-acid chain: Putative divalent cation/proton antiporter TMEM165 (324 aa).

Residues 1-33 (MAAAAPGNGRASAPRLLLLFLVPLLWAPAAVRA) form the signal peptide. The Lumenal portion of the chain corresponds to 34–89 (GPDEDLSHRNKEPPAPAQQLQPQPVAVQGPEPARVEKIFTPAAPVHTNKEDPATQT). A compositionally biased stretch (basic and acidic residues) spans 35–45 (PDEDLSHRNKE). The tract at residues 35-59 (PDEDLSHRNKEPPAPAQQLQPQPVA) is disordered. Low complexity predominate over residues 50-59 (AQQLQPQPVA). A helical transmembrane segment spans residues 90-110 (NLGFIHAFVAAISVIIVSELG). Topologically, residues 111–126 (DKTFFIAAIMAMRYNR) are cytoplasmic. A helical transmembrane segment spans residues 127–147 (LTVLAGAMLALGLMTCLSVLF). The Lumenal segment spans residues 148–151 (GYAT). A helical membrane pass occupies residues 152 to 172 (TVIPRVYTYYVSTVLFAIFGI). Residues 173-228 (RMLREGLKMSPDEGQEELEEVQAELKKKDEEFQRTKLLNGPGDVETGTSITVPQKK) are Cytoplasmic-facing. The stretch at 184–211 (DEGQEELEEVQAELKKKDEEFQRTKLLN) forms a coiled coil. The chain crosses the membrane as a helical span at residues 229–249 (WLHFISPIFVQALTLTFLAEW). Over 250–267 (GDRSQLTTIVLAAREDPY) the chain is Lumenal. Residues 268-288 (GVAVGGTVGHCLCTGLAVIGG) form a helical membrane-spanning segment. Topologically, residues 289-299 (RMIAQKISVRT) are cytoplasmic. The helical transmembrane segment at 300–320 (VTIIGGIVFLAFAFSALFISP) threads the bilayer. Topologically, residues 321-324 (DSGF) are lumenal.

This sequence belongs to the GDT1 family. In terms of tissue distribution, ubiquitously expressed.

It is found in the golgi apparatus membrane. It carries out the reaction Ca(2+)(in) + n H(+)(out) = Ca(2+)(out) + n H(+)(in). The catalysed reaction is Mn(2+)(in) + n H(+)(out) = Mn(2+)(out) + n H(+)(in). Putative divalent cation:proton antiporter that exchanges calcium or manganese ions for protons across the Golgi membrane. Mediates the reversible transport of calcium or manganese to the Golgi lumen driven by the proton gradient and possibly the membrane potential generated by V-ATPase. Provides calcium or manganese cofactors to resident Golgi enzymes and contributes to the maintenance of an acidic luminal Golgi pH required for proper functioning of the secretory pathway. Promotes Ca(2+) storage within the Golgi lumen of the mammary epithelial cells to be then secreted into milk. The transport mechanism and stoichiometry remains to be elucidated. The chain is Putative divalent cation/proton antiporter TMEM165 from Homo sapiens (Human).